The primary structure comprises 943 residues: Isoleucine--tRNA ligase (943 aa).

The 'HIGH' region motif lies at 59–69; that stretch reads PYANGQIHLGH. An L-isoleucyl-5'-AMP-binding site is contributed by Glu-577. The 'KMSKS' region motif lies at 618-622; sequence KMSKS. Lys-621 contacts ATP. Positions 906, 909, 926, and 929 each coordinate Zn(2+).

Belongs to the class-I aminoacyl-tRNA synthetase family. IleS type 1 subfamily. As to quaternary structure, monomer. Requires Zn(2+) as cofactor.

It localises to the cytoplasm. It catalyses the reaction tRNA(Ile) + L-isoleucine + ATP = L-isoleucyl-tRNA(Ile) + AMP + diphosphate. In terms of biological role, catalyzes the attachment of isoleucine to tRNA(Ile). As IleRS can inadvertently accommodate and process structurally similar amino acids such as valine, to avoid such errors it has two additional distinct tRNA(Ile)-dependent editing activities. One activity is designated as 'pretransfer' editing and involves the hydrolysis of activated Val-AMP. The other activity is designated 'posttransfer' editing and involves deacylation of mischarged Val-tRNA(Ile). This chain is Isoleucine--tRNA ligase, found in Xanthomonas campestris pv. campestris (strain 8004).